The chain runs to 275 residues: MAVKKYRPYTPSRRQMTTADFSGLTKKRPEKALTEALPKTGGRNNRGRITSRFIGGGHKRLYRIIDFKRRDKSGVNAKVAAIEYDPNRSARIALLHYADGEKRYILAPEGLTVGATVNAGPEAEPKLGNALPLRFVPVGAVVHALELVPGKGAQLARSAGTSVQVQGKESDYVIVRLPSGELRRVHSECYATIGAVGNAEHKNIVLGKAGRSRWLGRKPHQRGSAMNPVDHPHGGGEGRTGAGRVPVTPWGKPTKGLKTRRKRKTSDRFIVTRRK.

Disordered stretches follow at residues 1–20 (MAVK…TTAD) and 214–275 (WLGR…TRRK). Basic residues predominate over residues 255 to 275 (KGLKTRRKRKTSDRFIVTRRK).

This sequence belongs to the universal ribosomal protein uL2 family. Part of the 50S ribosomal subunit. Forms a bridge to the 30S subunit in the 70S ribosome.

In terms of biological role, one of the primary rRNA binding proteins. Required for association of the 30S and 50S subunits to form the 70S ribosome, for tRNA binding and peptide bond formation. It has been suggested to have peptidyltransferase activity; this is somewhat controversial. Makes several contacts with the 16S rRNA in the 70S ribosome. In Deinococcus radiodurans (strain ATCC 13939 / DSM 20539 / JCM 16871 / CCUG 27074 / LMG 4051 / NBRC 15346 / NCIMB 9279 / VKM B-1422 / R1), this protein is Large ribosomal subunit protein uL2 (rplB).